The following is a 142-amino-acid chain: Phosphoribosyl-AMP cyclohydrolase (142 aa).

Residue D92 coordinates Mg(2+). Residue C93 coordinates Zn(2+). D94 and D96 together coordinate Mg(2+). Residues C109 and C116 each coordinate Zn(2+).

This sequence belongs to the PRA-CH family. As to quaternary structure, homodimer. Mg(2+) serves as cofactor. Zn(2+) is required as a cofactor.

The protein localises to the cytoplasm. The enzyme catalyses 1-(5-phospho-beta-D-ribosyl)-5'-AMP + H2O = 1-(5-phospho-beta-D-ribosyl)-5-[(5-phospho-beta-D-ribosylamino)methylideneamino]imidazole-4-carboxamide. Its pathway is amino-acid biosynthesis; L-histidine biosynthesis; L-histidine from 5-phospho-alpha-D-ribose 1-diphosphate: step 3/9. Catalyzes the hydrolysis of the adenine ring of phosphoribosyl-AMP. The chain is Phosphoribosyl-AMP cyclohydrolase from Alkalilimnicola ehrlichii (strain ATCC BAA-1101 / DSM 17681 / MLHE-1).